Consider the following 309-residue polypeptide: Serine/threonine-protein phosphatase 2A catalytic subunit alpha isoform (309 aa).

Mn(2+)-binding residues include D57, H59, D85, and N117. Residues D57, H59, and D85 each coordinate Zn(2+). Residues D85 and N117 each contribute to the Fe(3+) site. The Proton donor role is filled by H118. Residues H167 and H241 each coordinate Mn(2+). Residues H167 and H241 each coordinate Fe(3+). A Phosphotyrosine modification is found at Y307. At L309 the chain carries Leucine methyl ester.

It belongs to the PPP phosphatase family. PP-1 subfamily. PP2A consists of a common heterodimeric core enzyme composed of PPP2CA, a 36 kDa catalytic subunit (subunit C), and PPP2R1A, a 65 kDa constant regulatory subunit (PR65 or subunit A), that associates with a variety of regulatory subunits. Proteins that associate with the core dimer include three families of regulatory subunits B (the R2/B/PR55/B55, R3/B''/PR72/PR130/PR59 and R5/B'/B56 families), the 48 kDa variable regulatory subunit, viral proteins, and cell signaling molecules. Interacts with the PP2A A subunit PPP2R1A. Interacts with the regulatory subunit PPP2R2A. Interacts (via C-terminus) with PTPA. Interacts with NXN; the interaction is direct. Interacts with KCTD20. Interacts with BTBD10. Interacts with SGO1 and SGO2. Interacts with RAF1. Interaction with IGBP1 protects unassembled PPP2CA from degradative ubiquitination. Interacts with GSK3B (via C2 domain). Interacts with MFHAS1; retains PPP2CA into the cytoplasm and excludes it from the nucleus. Interacts with PABIR1/FAM122A. Interacts with ADCY8; interaction is phosphatase activity-dependent; antagonizes interaction between ADCY8 and calmodulin. Interacts with CRTC3 (when phosphorylated at 'Ser-391'). Interacts with SPRY2; the interaction is inhibited by TESK1 interaction with SPRY2, possibly by vesicular sequestration of SPRY2. Interacts with TRAF3IP3. Interacts with AMBRA1 (via PxP motifs); enhancing interaction between PPP2CA and MYC or FOXO3. Forms a complex with AMBRA1 and BECN1; AMBRA1 and BECN1 components of the complex regulate MYC stability via different pathways. Part of the core of STRIPAK complexes composed of PP2A catalytic and scaffolding subunits, the striatins (PP2A regulatory subunits), the striatin-associated proteins MOB4, STRIP1 and STRIP2, PDCD10 and members of the STE20 kinases, such as STK24 and STK26. Phosphatase component of the Integrator-PP2A (INTAC) complex, composed of the Integrator core complex and protein phosphatase 2A subunits PPP2CA and PPP2R1A. It depends on Mn(2+) as a cofactor. Fe(3+) is required as a cofactor. Requires Zn(2+) as cofactor. In terms of processing, reversibly methyl esterified on Leu-309 by leucine carboxyl methyltransferase 1 (LCMT1) and protein phosphatase methylesterase 1 (PPME1). Carboxyl methylation influences the affinity of the catalytic subunit for the different regulatory subunits, thereby modulating the PP2A holoenzyme's substrate specificity, enzyme activity and cellular localization. Phosphorylation of either threonine (by autophosphorylation-activated protein kinase) or tyrosine results in inactivation of the phosphatase. Auto-dephosphorylation has been suggested as a mechanism for reactivation. Post-translationally, polyubiquitinated, leading to its degradation by the proteasome.

Its subcellular location is the cytoplasm. The protein resides in the nucleus. The protein localises to the chromosome. It localises to the centromere. It is found in the cytoskeleton. Its subcellular location is the spindle pole. It carries out the reaction O-phospho-L-seryl-[protein] + H2O = L-seryl-[protein] + phosphate. It catalyses the reaction O-phospho-L-threonyl-[protein] + H2O = L-threonyl-[protein] + phosphate. Inhibited by the interaction between PPP2R2A and ARPP19; this inhibition is enhanced when ARPP19 is phosphorylated. Inhibited by the interaction between PPP2R2A and PABIR1/FAM122A. Its function is as follows. Catalytic subunit of protein phosphatase 2A (PP2A), a serine/threonine phosphatase involved in the regulation of a wide variety of enzymes, signal transduction pathways, and cellular events. PP2A is the major phosphatase for microtubule-associated proteins (MAPs). PP2A can modulate the activity of phosphorylase B kinase casein kinase 2, mitogen-stimulated S6 kinase, and MAP-2 kinase. Cooperates with SGO2 to protect centromeric cohesin from separase-mediated cleavage in oocytes specifically during meiosis I. Can dephosphorylate various proteins, such as SV40 large T antigen, AXIN1, p53/TP53, PIM3, WEE1. Activates RAF1 by dephosphorylating it at 'Ser-259'. Mediates dephosphorylation of WEE1, preventing its ubiquitin-mediated proteolysis, increasing WEE1 protein levels, and promoting the G2/M checkpoint. Mediates dephosphorylation of MYC; promoting its ubiquitin-mediated proteolysis: interaction with AMBRA1 enhances interaction between PPP2CA and MYC. Mediates dephosphorylation of FOXO3; promoting its stabilization: interaction with AMBRA1 enhances interaction between PPP2CA and FOXO3. Catalyzes dephosphorylation of the pyrin domain of NLRP3, promoting assembly of the NLRP3 inflammasome. Together with RACK1 adapter, mediates dephosphorylation of AKT1 at 'Ser-473', preventing AKT1 activation and AKT-mTOR signaling pathway. Dephosphorylation of AKT1 is essential for regulatory T-cells (Treg) homeostasis and stability. Catalyzes dephosphorylation of PIM3, promotinh PIM3 ubiquitination and proteasomal degradation. Part of the striatin-interacting phosphatase and kinase (STRIPAK) complexes. STRIPAK complexes have critical roles in protein (de)phosphorylation and are regulators of multiple signaling pathways including Hippo, MAPK, nuclear receptor and cytoskeleton remodeling. Different types of STRIPAK complexes are involved in a variety of biological processes such as cell growth, differentiation, apoptosis, metabolism and immune regulation. Key mediator of a quality checkpoint during transcription elongation as part of the Integrator-PP2A (INTAC) complex. The INTAC complex drives premature transcription termination of transcripts that are unfavorably configured for transcriptional elongation: within the INTAC complex, PPP2CA catalyzes dephosphorylation of the C-terminal domain (CTD) of Pol II subunit POLR2A/RPB1 and SUPT5H/SPT5, thereby preventing transcriptional elongation. In Homo sapiens (Human), this protein is Serine/threonine-protein phosphatase 2A catalytic subunit alpha isoform (PPP2CA).